Reading from the N-terminus, the 89-residue chain is Phosphocarrier protein HPr (89 aa).

An HPr domain is found at 1 to 88 (MLEHELIVTN…ELFENRFNED (88 aa)). His15 serves as the catalytic Pros-phosphohistidine intermediate. Ser46 is modified (phosphoserine; by HPrK/P).

Belongs to the HPr family.

The protein localises to the cytoplasm. Phosphorylation on Ser-46 inhibits the phosphoryl transfer from enzyme I to HPr. Functionally, general (non sugar-specific) component of the phosphoenolpyruvate-dependent sugar phosphotransferase system (sugar PTS). This major carbohydrate active-transport system catalyzes the phosphorylation of incoming sugar substrates concomitantly with their translocation across the cell membrane. The phosphoryl group from phosphoenolpyruvate (PEP) is transferred to the phosphoryl carrier protein HPr by enzyme I. Phospho-HPr then transfers it to the PTS EIIA domain. This is Phosphocarrier protein HPr (ptsH) from Xylella fastidiosa (strain 9a5c).